The chain runs to 273 residues: Phosphatidylglycerol--prolipoprotein diacylglyceryl transferase (273 aa).

7 consecutive transmembrane segments (helical) span residues 21-41 (VSVR…LWLA), 60-80 (LLFA…VIFY), 95-115 (VWTG…AMFW), 124-144 (FFGV…MGRM), 176-196 (SQLY…NWFI), 203-223 (GAVS…VEFV), and 237-257 (ISMG…MMVW). Arg-143 contributes to the a 1,2-diacyl-sn-glycero-3-phospho-(1'-sn-glycerol) binding site.

Belongs to the Lgt family.

It is found in the cell inner membrane. It catalyses the reaction L-cysteinyl-[prolipoprotein] + a 1,2-diacyl-sn-glycero-3-phospho-(1'-sn-glycerol) = an S-1,2-diacyl-sn-glyceryl-L-cysteinyl-[prolipoprotein] + sn-glycerol 1-phosphate + H(+). It functions in the pathway protein modification; lipoprotein biosynthesis (diacylglyceryl transfer). In terms of biological role, catalyzes the transfer of the diacylglyceryl group from phosphatidylglycerol to the sulfhydryl group of the N-terminal cysteine of a prolipoprotein, the first step in the formation of mature lipoproteins. In Vibrio campbellii (strain ATCC BAA-1116), this protein is Phosphatidylglycerol--prolipoprotein diacylglyceryl transferase.